The sequence spans 211 residues: ATP phosphoribosyltransferase (211 aa).

Belongs to the ATP phosphoribosyltransferase family. Short subfamily. As to quaternary structure, heteromultimer composed of HisG and HisZ subunits.

It localises to the cytoplasm. It catalyses the reaction 1-(5-phospho-beta-D-ribosyl)-ATP + diphosphate = 5-phospho-alpha-D-ribose 1-diphosphate + ATP. Its pathway is amino-acid biosynthesis; L-histidine biosynthesis; L-histidine from 5-phospho-alpha-D-ribose 1-diphosphate: step 1/9. Catalyzes the condensation of ATP and 5-phosphoribose 1-diphosphate to form N'-(5'-phosphoribosyl)-ATP (PR-ATP). Has a crucial role in the pathway because the rate of histidine biosynthesis seems to be controlled primarily by regulation of HisG enzymatic activity. The sequence is that of ATP phosphoribosyltransferase from Pseudomonas putida (strain ATCC 47054 / DSM 6125 / CFBP 8728 / NCIMB 11950 / KT2440).